The chain runs to 573 residues: Urease subunit alpha 2 (573 aa).

In terms of domain architecture, Urease spans 136–573 (GAIDAHVHLI…LPMAQRYFLF (438 aa)). Residues His141, His143, and Lys224 each contribute to the Ni(2+) site. Position 224 is an N6-carboxylysine (Lys224). His226 serves as a coordination point for substrate. Residues His253 and His279 each contribute to the Ni(2+) site. The active-site Proton donor is the His327. A Ni(2+)-binding site is contributed by Asp367.

Belongs to the metallo-dependent hydrolases superfamily. Urease alpha subunit family. As to quaternary structure, may form a heterohexamer of 3 UreC (alpha) and 3 UreAB (gamma/beta) subunits. May also form a heterotrimer of UreA (gamma), UreB (beta) and UreC (alpha) subunits. Three heterotrimers associate to form the active enzyme. It depends on Ni cation as a cofactor. Post-translationally, carboxylation allows a single lysine to coordinate two nickel ions.

It is found in the cytoplasm. The catalysed reaction is urea + 2 H2O + H(+) = hydrogencarbonate + 2 NH4(+). It participates in nitrogen metabolism; urea degradation; CO(2) and NH(3) from urea (urease route): step 1/1. The protein is Urease subunit alpha 2 of Streptomyces avermitilis (strain ATCC 31267 / DSM 46492 / JCM 5070 / NBRC 14893 / NCIMB 12804 / NRRL 8165 / MA-4680).